Consider the following 116-residue polypeptide: uncharacterized protein (116 aa).

The VOC domain occupies 5 to 113; that stretch reads EVKMVVLSTE…TGNGLVFYSP (109 aa). Lys-76 is covalently cross-linked (Isoglutamyl lysine isopeptide (Lys-Gln) (interchain with Q-Cter in protein Pup)).

This is an uncharacterized protein from Mycolicibacterium smegmatis (strain ATCC 700084 / mc(2)155) (Mycobacterium smegmatis).